A 499-amino-acid polypeptide reads, in one-letter code: NAD(P)H-quinone oxidoreductase chain 4, chloroplastic (499 aa).

The next 14 helical transmembrane spans lie at L4–F24, M31–F51, I87–V107, L113–A130, I134–M154, F167–L187, I211–H231, H242–I262, S274–T294, I305–Y325, G330–G350, L386–T406, I416–M436, and L462–V482.

The protein belongs to the complex I subunit 4 family.

The protein resides in the plastid. It localises to the chloroplast thylakoid membrane. The enzyme catalyses a plastoquinone + NADH + (n+1) H(+)(in) = a plastoquinol + NAD(+) + n H(+)(out). The catalysed reaction is a plastoquinone + NADPH + (n+1) H(+)(in) = a plastoquinol + NADP(+) + n H(+)(out). The polypeptide is NAD(P)H-quinone oxidoreductase chain 4, chloroplastic (Cryptomeria japonica (Japanese cedar)).